A 293-amino-acid chain; its full sequence is ATP synthase gamma chain (293 aa).

The protein belongs to the ATPase gamma chain family. In terms of assembly, F-type ATPases have 2 components, CF(1) - the catalytic core - and CF(0) - the membrane proton channel. CF(1) has five subunits: alpha(3), beta(3), gamma(1), delta(1), epsilon(1). CF(0) has three main subunits: a, b and c.

The protein resides in the cell inner membrane. Functionally, produces ATP from ADP in the presence of a proton gradient across the membrane. The gamma chain is believed to be important in regulating ATPase activity and the flow of protons through the CF(0) complex. The sequence is that of ATP synthase gamma chain from Allorhizobium ampelinum (strain ATCC BAA-846 / DSM 112012 / S4) (Agrobacterium vitis (strain S4)).